The primary structure comprises 316 residues: Cobalamin biosynthesis protein CobD (316 aa).

5 consecutive transmembrane segments (helical) span residues 45-65, 78-100, 151-171, 209-229, and 291-311; these read FSPYLFGFFLWLTTVGLALGV, PVLYWLVWIYLAYASLAAKSLAF, DGVIGPLLCLFLGGPILAMTY, LTWLFLILSSQILLLDVKGAL, and ISLLYTSTMTGLILFTLFYLV.

Belongs to the CobD/CbiB family.

It is found in the cell membrane. It functions in the pathway cofactor biosynthesis; adenosylcobalamin biosynthesis. Functionally, converts cobyric acid to cobinamide by the addition of aminopropanol on the F carboxylic group. This chain is Cobalamin biosynthesis protein CobD, found in Streptococcus sanguinis (strain SK36).